Consider the following 167-residue polypeptide: MNIVVYPGTFDPVTNGHYDLIERASRMFDKVVVAVAASPRKQPTLSLETRVALIEEVTADLDNVTVTGFSCLLTQLLAQQNARIILRGLRAVSDFEYELQLANMNRAQAPDVESLFLTPEVENSYISSTIVREIARLGGDVSKLVHPCVVDALSRHFAQDPSSPKTQ.

Substrate is bound at residue threonine 9. Residues threonine 9 to phenylalanine 10 and histidine 17 each bind ATP. The substrate site is built by lysine 41, leucine 73, and arginine 87. ATP is bound by residues glycine 88 to arginine 90, glutamate 98, and asparagine 123 to threonine 129.

This sequence belongs to the bacterial CoaD family. As to quaternary structure, homohexamer. It depends on Mg(2+) as a cofactor.

The protein resides in the cytoplasm. The catalysed reaction is (R)-4'-phosphopantetheine + ATP + H(+) = 3'-dephospho-CoA + diphosphate. Its pathway is cofactor biosynthesis; coenzyme A biosynthesis; CoA from (R)-pantothenate: step 4/5. In terms of biological role, reversibly transfers an adenylyl group from ATP to 4'-phosphopantetheine, yielding dephospho-CoA (dPCoA) and pyrophosphate. This chain is Phosphopantetheine adenylyltransferase, found in Chromohalobacter salexigens (strain ATCC BAA-138 / DSM 3043 / CIP 106854 / NCIMB 13768 / 1H11).